Reading from the N-terminus, the 545-residue chain is Esterase-5C (545 aa).

The signal sequence occupies residues 1-19 (MLAARLIILLSFYWLSASA). A disulfide bridge connects residues cysteine 84 and cysteine 103. Asparagine 113 carries an N-linked (GlcNAc...) asparagine glycan. Serine 207 serves as the catalytic Acyl-ester intermediate. Cysteine 259 and cysteine 271 form a disulfide bridge. A glycan (N-linked (GlcNAc...) asparagine) is linked at asparagine 421. Histidine 467 acts as the Charge relay system in catalysis. N-linked (GlcNAc...) asparagine glycosylation is present at asparagine 507. Cysteine 515 and cysteine 536 form a disulfide bridge.

Belongs to the type-B carboxylesterase/lipase family.

Its subcellular location is the secreted. The enzyme catalyses a carboxylic ester + H2O = an alcohol + a carboxylate + H(+). The sequence is that of Esterase-5C (Est-5C) from Drosophila miranda (Fruit fly).